A 78-amino-acid chain; its full sequence is Probable Fe(2+)-trafficking protein (78 aa).

Belongs to the Fe(2+)-trafficking protein family. As to quaternary structure, monomer.

Functionally, could be a mediator in iron transactions between iron acquisition and iron-requiring processes, such as synthesis and/or repair of Fe-S clusters in biosynthetic enzymes. In Buchnera aphidicola subsp. Schizaphis graminum (strain Sg), this protein is Probable Fe(2+)-trafficking protein.